Here is a 170-residue protein sequence, read N- to C-terminus: Inducible metalloproteinase inhibitor protein (170 aa).

The signal sequence occupies residues methionine 1–serine 19. N-linked (GlcNAc...) asparagine glycans are attached at residues asparagine 48 and asparagine 149.

In terms of processing, cleaved. Five disulfide bonds are present. When artificially cleaved by thermolysin between Asn-56 and Ile-57, the two obtained chains (called heavy and light chains) remain linked. Post-translationally, the N-terminus is blocked.

Functionally, inhibits thermolysin, bacillolysin and pseudolysin, B.polymyxa metalloprotease and human MMP1 and MMP3. No activity on trypsin or cysteine protease papain. This is Inducible metalloproteinase inhibitor protein (IMPI) from Galleria mellonella (Greater wax moth).